Consider the following 773-residue polypeptide: Membrane-bound aldehyde dehydrogenase [pyrroloquinoline-quinone] (773 aa).

Positions 1–44 form a signal peptide, tat-type signal; it reads MGRLNRFRLGKDGRREQASLSRRGFLVTSLGAGVMFGFARPSSA.

Pyrroloquinoline quinone is required as a cofactor. Predicted to be exported by the Tat system. The position of the signal peptide cleavage has been experimentally proven.

The protein resides in the cell inner membrane. It catalyses the reaction an aldehyde + a quinone + H2O = a quinol + a carboxylate + H(+). This Gluconacetobacter polyoxogenes (Acetobacter polyoxogenes) protein is Membrane-bound aldehyde dehydrogenase [pyrroloquinoline-quinone].